The sequence spans 584 residues: Aspartate--tRNA(Asp/Asn) ligase (584 aa).

Glutamate 173 serves as a coordination point for L-aspartate. The aspartate stretch occupies residues 197–200; sequence QLFK. Arginine 219 contributes to the L-aspartate binding site. ATP contacts are provided by residues 219–221 and glutamine 228; that span reads RDE. L-aspartate is bound at residue histidine 446. Glutamate 476 lines the ATP pocket. Residue arginine 483 coordinates L-aspartate. Residue 528–531 coordinates ATP; it reads GLDR.

This sequence belongs to the class-II aminoacyl-tRNA synthetase family. Type 1 subfamily. In terms of assembly, homodimer.

It localises to the cytoplasm. The catalysed reaction is tRNA(Asx) + L-aspartate + ATP = L-aspartyl-tRNA(Asx) + AMP + diphosphate. Its function is as follows. Aspartyl-tRNA synthetase with relaxed tRNA specificity since it is able to aspartylate not only its cognate tRNA(Asp) but also tRNA(Asn). Reaction proceeds in two steps: L-aspartate is first activated by ATP to form Asp-AMP and then transferred to the acceptor end of tRNA(Asp/Asn). In Sulfurovum sp. (strain NBC37-1), this protein is Aspartate--tRNA(Asp/Asn) ligase.